A 1073-amino-acid polypeptide reads, in one-letter code: Probable inorganic carbon transporter subunit DabA 2 (1073 aa).

Polar residues predominate over residues 1 to 20 (MSSGNTSSQNHSPVNNQPTR). Residues 1-35 (MSSGNTSSQNHSPVNNQPTRLKSPLPALHKDTQPN) form a disordered region. Residues Cys-535, Asp-537, His-721, and Cys-736 each contribute to the Zn(2+) site.

This sequence belongs to the inorganic carbon transporter (TC 9.A.2) DabA family. In terms of assembly, forms a complex with DabB. The cofactor is Zn(2+).

The protein resides in the cell inner membrane. Its function is as follows. Part of an energy-coupled inorganic carbon pump. The protein is Probable inorganic carbon transporter subunit DabA 2 of Rhodopirellula baltica (strain DSM 10527 / NCIMB 13988 / SH1).